The primary structure comprises 350 residues: MNELDSLVESAQQLFAQAQTPADLENAKAQFLGKSGKVTELMKGMAQLSVEEKKSRGAAINVAKQGIEAALTARRKALADAELQAHLKAEVLDVTLPGRRRGQGGLHPVSLTLERIEGIFGSMGFDVAEGPEIESDWFNFTALNTPEDHPARSMHDTFYVEGGTEQAPNLLRTHTSPMQVRHAVQHVKKYRERLDAGQGMPEIRVIAPGRTYRVDSDATHSPMFHQCEGLWIGENVSFKDLKVVFTDFCKTFFESDDLVLRFRPSFFPFTEPSAEIDIQFQSGPLAGRWLEVAGSGQVHPNVVRNMGLDPEKYIGFAFGMGPDRLTMLRYGVNDLRLFFDGDIRFLSQFR.

A Mg(2+)-binding site is contributed by glutamate 271.

This sequence belongs to the class-II aminoacyl-tRNA synthetase family. Phe-tRNA synthetase alpha subunit type 1 subfamily. Tetramer of two alpha and two beta subunits. The cofactor is Mg(2+).

Its subcellular location is the cytoplasm. The enzyme catalyses tRNA(Phe) + L-phenylalanine + ATP = L-phenylalanyl-tRNA(Phe) + AMP + diphosphate + H(+). The protein is Phenylalanine--tRNA ligase alpha subunit of Delftia acidovorans (strain DSM 14801 / SPH-1).